We begin with the raw amino-acid sequence, 434 residues long: Adenylosuccinate synthetase (434 aa).

Residues 22–28 (GDEGKGK) and 50–52 (GHT) each bind GTP. D23 (proton acceptor) is an active-site residue. Mg(2+) is bound by residues D23 and G50. IMP is bound by residues 23 to 26 (DEGK), 48 to 51 (NAGH), T139, R153, Q234, T249, and R313. H51 serves as the catalytic Proton donor. 309 to 315 (ATTGRKR) contacts substrate. Residues R315, 341 to 343 (KLD), and 423 to 425 (SVG) contribute to the GTP site.

The protein belongs to the adenylosuccinate synthetase family. In terms of assembly, homodimer. Mg(2+) serves as cofactor.

The protein localises to the cytoplasm. The enzyme catalyses IMP + L-aspartate + GTP = N(6)-(1,2-dicarboxyethyl)-AMP + GDP + phosphate + 2 H(+). It functions in the pathway purine metabolism; AMP biosynthesis via de novo pathway; AMP from IMP: step 1/2. Plays an important role in the de novo pathway of purine nucleotide biosynthesis. Catalyzes the first committed step in the biosynthesis of AMP from IMP. The sequence is that of Adenylosuccinate synthetase from Chlorobium chlorochromatii (strain CaD3).